The primary structure comprises 305 residues: MVIMARPYWSGQLRISLVSFGISLIPATESKSEIHFHEIDRETGQRVRHQKVLPESGEAVENREIVKGYEYSKGKYIPVEPEDIQNLRVASSKTIDLEQFVTVDEIDPACYEKPYFVLPENASQAEAFAVVRKALEETGKAGIGKIALAGREHLVAICAPGNPRLLGLMAYTLRFAEEMRSAEQYFAGIEAGKVDPEQLSLARELIQRKSSSFDLKKFKDEYETALRELVDARLKHVALPRQEVATARGKVIDLMDALRRSVGEENGRKKSVSGAQHRSRRKSKGEQKLKVVRSGSSSDKRRKSA.

The region spanning 16–202 (SLVSFGISLI…KVDPEQLSLA (187 aa)) is the Ku domain. A disordered region spans residues 263–305 (GEENGRKKSVSGAQHRSRRKSKGEQKLKVVRSGSSSDKRRKSA).

It belongs to the prokaryotic Ku family. As to quaternary structure, homodimer. Interacts with LigD.

With LigD forms a non-homologous end joining (NHEJ) DNA repair enzyme, which repairs dsDNA breaks with reduced fidelity. Binds linear dsDNA with 5'- and 3'- overhangs but not closed circular dsDNA nor ssDNA. Recruits and stimulates the ligase activity of LigD. This chain is Non-homologous end joining protein Ku, found in Acidobacterium capsulatum (strain ATCC 51196 / DSM 11244 / BCRC 80197 / JCM 7670 / NBRC 15755 / NCIMB 13165 / 161).